Here is a 41-residue protein sequence, read N- to C-terminus: Photosystem II reaction center protein L (41 aa).

A helical membrane pass occupies residues 20–40 (LFLGLLLVFVLGILSPATSLT).

It belongs to the PsbL family. In terms of assembly, PSII is composed of 1 copy each of membrane proteins PsbA, PsbB, PsbC, PsbD, PsbE, PsbF, PsbH, PsbI, PsbJ, PsbK, PsbL, PsbM, PsbT, PsbX, PsbY, PsbZ, Psb30/Ycf12, peripheral proteins PsbO, CyanoQ (PsbQ), PsbU, PsbV and a large number of cofactors. It forms dimeric complexes.

It localises to the cellular thylakoid membrane. One of the components of the core complex of photosystem II (PSII). PSII is a light-driven water:plastoquinone oxidoreductase that uses light energy to abstract electrons from H(2)O, generating O(2) and a proton gradient subsequently used for ATP formation. It consists of a core antenna complex that captures photons, and an electron transfer chain that converts photonic excitation into a charge separation. This subunit is found at the monomer-monomer interface and is required for correct PSII assembly and/or dimerization. The chain is Photosystem II reaction center protein L from Synechococcus sp. (strain ATCC 27144 / PCC 6301 / SAUG 1402/1) (Anacystis nidulans).